The following is a 218-amino-acid chain: Glutathione S-transferase class-mu 26 kDa isozyme 51 (218 aa).

Positions 2–83 constitute a GST N-terminal domain; sequence PAKLGYWKIR…YIADKHGMLG (82 aa). Glutathione-binding positions include 7–8, 41–45, 54–55, and 67–68; these read YW, WFGDK, NL, and QS. Positions 85 to 203 constitute a GST C-terminal domain; it reads TPEERARISM…ESEKFIKWPL (119 aa). Residue Tyr-111 participates in substrate binding.

The protein belongs to the GST superfamily. Mu family. Homodimer.

The protein localises to the cytoplasm. The catalysed reaction is RX + glutathione = an S-substituted glutathione + a halide anion + H(+). Its function is as follows. Conjugation of reduced glutathione to a wide number of exogenous and endogenous hydrophobic electrophiles. GST isoenzymes appear to play a central role in the parasite detoxification system. Other functions are also suspected including a role in increasing the solubility of haematin in the parasite gut. The sequence is that of Glutathione S-transferase class-mu 26 kDa isozyme 51 from Fasciola hepatica (Liver fluke).